Reading from the N-terminus, the 709-residue chain is Heme/hemopexin utilization protein C (709 aa).

Residues 1–21 form the signal peptide; that stretch reads MRFSKLSLAITTTLVTANALA. Positions 36–147 constitute a TBDR plug domain; that stretch reads DPSRFTYTPQ…LGGVVAMRTP (112 aa). The TBDR beta-barrel domain maps to 158-709; sequence KFGVKIRQGY…NAKISAVYSF (552 aa). Positions 692–709 match the TonB C-terminal box motif; that stretch reads SLMEGTGRNAKISAVYSF.

Belongs to the TonB-dependent receptor family.

It localises to the cell outer membrane. In terms of biological role, required for utilization of free heme at low concentrations. The sequence is that of Heme/hemopexin utilization protein C (hxuC) from Haemophilus influenzae (strain 86-028NP).